The chain runs to 150 residues: Small ribosomal subunit protein uS11 (150 aa).

Positions 126-150 (GRIEDVTPTPSDSTRRKGGRRGRRL) are disordered. The span at 141–150 (RKGGRRGRRL) shows a compositional bias: basic residues.

Belongs to the universal ribosomal protein uS11 family. Component of the small ribosomal subunit (SSU). Mature N.crassa ribosomes consist of a small (40S) and a large (60S) subunit. The 40S small subunit contains 1 molecule of ribosomal RNA (18S rRNA) and at least 32 different proteins. The large 60S subunit contains 3 rRNA molecules (26S, 5.8S and 5S rRNA) and at least 42 different proteins.

The protein localises to the cytoplasm. Component of the ribosome, a large ribonucleoprotein complex responsible for the synthesis of proteins in the cell. The small ribosomal subunit (SSU) binds messenger RNAs (mRNAs) and translates the encoded message by selecting cognate aminoacyl-transfer RNA (tRNA) molecules. The large subunit (LSU) contains the ribosomal catalytic site termed the peptidyl transferase center (PTC), which catalyzes the formation of peptide bonds, thereby polymerizing the amino acids delivered by tRNAs into a polypeptide chain. The nascent polypeptides leave the ribosome through a tunnel in the LSU and interact with protein factors that function in enzymatic processing, targeting, and the membrane insertion of nascent chains at the exit of the ribosomal tunnel. uS11 is involved in nucleolar processing of pre-18S ribosomal RNA and ribosome assembly. The polypeptide is Small ribosomal subunit protein uS11 (rps-14) (Neurospora crassa (strain ATCC 24698 / 74-OR23-1A / CBS 708.71 / DSM 1257 / FGSC 987)).